The sequence spans 29 residues: Cytochrome b6-f complex subunit 8 (29 aa).

A helical transmembrane segment spans residues 3–23 (ILTLGWVSILALFTWSIAMVV).

The protein belongs to the PetN family. In terms of assembly, the 4 large subunits of the cytochrome b6-f complex are cytochrome b6, subunit IV (17 kDa polypeptide, PetD), cytochrome f and the Rieske protein, while the 4 small subunits are PetG, PetL, PetM and PetN. The complex functions as a dimer.

It localises to the cellular thylakoid membrane. Functionally, component of the cytochrome b6-f complex, which mediates electron transfer between photosystem II (PSII) and photosystem I (PSI), cyclic electron flow around PSI, and state transitions. The protein is Cytochrome b6-f complex subunit 8 of Microcystis aeruginosa (strain NIES-843 / IAM M-2473).